Consider the following 307-residue polypeptide: Serine/threonine-protein phosphatase PP2A-2 catalytic subunit (307 aa).

Mn(2+) is bound by residues aspartate 55, histidine 57, aspartate 83, and asparagine 115. The active-site Proton donor is the histidine 116. Positions 165 and 239 each coordinate Mn(2+).

The protein belongs to the PPP phosphatase family. PP-2A subfamily. Mn(2+) is required as a cofactor.

The protein localises to the cytoplasm. The catalysed reaction is O-phospho-L-seryl-[protein] + H2O = L-seryl-[protein] + phosphate. It carries out the reaction O-phospho-L-threonyl-[protein] + H2O = L-threonyl-[protein] + phosphate. This Oryza sativa subsp. indica (Rice) protein is Serine/threonine-protein phosphatase PP2A-2 catalytic subunit (PP2A2).